We begin with the raw amino-acid sequence, 612 residues long: MAEATEPKEVSSGSQGQPEGAVIEGPGEPGAADLEGREASEGAAEAPRDLGEGAEAMASGKEEGGCGQDGEIGEVQAQDPRPGPGTETPGTSGAPGEAEAAECDSEGALIPQSGGGAKRQQVQGTSSGLDAQGEAPEVPEDARREPEDPKASEAGEEAESGQEALGGSAPESQINPEVQGPVGDNMDTEAPAGEPQGSEGEPQGGGESSPQPQDEAIEIAAAEVGGHEPGELAGASAADAKGEGETLRKDGFEEAAPEEARVDSGENGFEEAAPEEARVDSGENRDQGRLQEETGEEEARPESGLKGPCEEAIQEKAPDGSLDGEEAKSTGHEESQVELSNHLAEETSAQGGEELGRVNGRRENGPASEEGDLGQEHDITLFVKAGSDGESIGNCPFSQRLFMILWLKGVIFNVTTVDLKRKPADLQNLAPGTNPPFMTFDGEVKTDVNKIEEFLEEKLVPPRYPKLGTQHPESNSAGNDVFAKFSAFIKNTKKDANDIYEKNLLRALKKLDSYLNSPLPDEIDAYSTEDVTVSQRKFLDGDELTLADCNLLPKLHIIKIVAKKYRGFEFPSEMTGIWRYLNNAYARDEFTNTCPADQEIEHAYSDAAKRMK.

The segment at Met1–Leu373 is disordered. Positions Leu34 to Gly51 are enriched in basic and acidic residues. The residue at position 40 (Ser40) is a Phosphoserine. The segment covering Pro84 to Gly96 has biased composition (low complexity). The span at Gln120–Leu129 shows a compositional bias: polar residues. Basic and acidic residues predominate over residues Glu140–Glu153. The segment covering Ser208–Glu223 has biased composition (low complexity). Composition is skewed to basic and acidic residues over residues Ala240 to Ser264 and Glu275 to Ser303. 3 positions are modified to phosphoserine: Ser264, Ser303, and Ser321. Basic and acidic residues-rich tracts occupy residues Glu325–Ser335 and Glu354–Asn364. Phosphoserine is present on Ser368. Residues Cys395–Ser398 carry the G-site motif. Residues Phe397 to Val417 traverse the membrane as a helical segment. The GST C-terminal domain occupies Asp441–Lys612.

It belongs to the chloride channel CLIC family. Monomer (soluble state). Interacts with dopamine receptors DRD2, DRD3 and DRD4. Post-translationally, phosphorylated. Predominantly expressed in brain, pituitary and stomach. In adult brain, it is restricted to the choroid plexus, the striatal proliferative subventricular zone and the cerebellum where it colocalizes with the D(3)R in the Purkinje cells of the lobules IX and X.

Its subcellular location is the cytoplasm. It is found in the cell membrane. It catalyses the reaction chloride(in) = chloride(out). Its activity is regulated as follows. Channel activity is redox- and pH-regulated. Inhibited by IAA-94. In terms of biological role, in the soluble state, catalyzes glutaredoxin-like thiol disulfide exchange reactions with reduced glutathione as electron donor. Can insert into membranes and form voltage-dependent chloride-selective channels. The channel opens upon membrane depolarization at positive voltages and closes at negative membrane voltages. May play a critical role in water-secreting cells, possibly through the regulation of chloride ion transport. The chain is Chloride intracellular channel protein 6 (Clic6) from Rattus norvegicus (Rat).